A 134-amino-acid polypeptide reads, in one-letter code: Small ribosomal subunit protein uS12 (134 aa).

The interval 1–27 (MPTIQQLVRKGRESFADKSKSPALNSC) is disordered. Positions 10-20 (KGRESFADKSK) are enriched in basic and acidic residues. The residue at position 89 (Asp89) is a 3-methylthioaspartic acid. A disordered region spans residues 103–134 (DTAGVNGRTQRRSKYGAKRPKPGQAPAAKGKK). A compositionally biased stretch (basic residues) spans 111–123 (TQRRSKYGAKRPK). A compositionally biased stretch (low complexity) spans 124–134 (PGQAPAAKGKK).

It belongs to the universal ribosomal protein uS12 family. Part of the 30S ribosomal subunit. Contacts proteins S8 and S17. May interact with IF1 in the 30S initiation complex.

Its function is as follows. With S4 and S5 plays an important role in translational accuracy. In terms of biological role, interacts with and stabilizes bases of the 16S rRNA that are involved in tRNA selection in the A site and with the mRNA backbone. Located at the interface of the 30S and 50S subunits, it traverses the body of the 30S subunit contacting proteins on the other side and probably holding the rRNA structure together. The combined cluster of proteins S8, S12 and S17 appears to hold together the shoulder and platform of the 30S subunit. This chain is Small ribosomal subunit protein uS12, found in Porphyromonas gingivalis (strain ATCC 33277 / DSM 20709 / CIP 103683 / JCM 12257 / NCTC 11834 / 2561).